The chain runs to 582 residues: Protein NUCLEAR FUSION DEFECTIVE 4 (582 aa).

The interval 1–20 (MRPRIRDVSDKLRPNRASFD) is disordered. The next 8 helical transmembrane spans lie at 46–66 (VLVAAIWIQASTGTNFDFSAY), 100–120 (IALGYFPLSVVLFAAAAMGFV), 132–152 (IITLPYSLVFLCCLLAGLSIC), 172–192 (LALSLTVSFNGISAALYSLAF), 202–222 (LYLLLNSLVPLVVSFAALYPV), 243–263 (VFTILNVLAVITSFHLLLSSS), 270–290 (LNFIGAVVLLVFPLCAPLLVY), and 358–378 (LEFWLYYIAYFCGGTIGLVYS). N-linked (GlcNAc...) asparagine glycosylation is present at Asn391. Helical transmembrane passes span 395–412 (LVTIYSSFSFFGRLLSAA), 425–445 (TGWFAIALLPTPIAFFLLAVS), 458–478 (LIGLSSGFIFAAAVSITSDLF), 489–509 (ILITNIPIGSLLYGYIAASIY), and 536–556 (TFVFWGCLSILGVVSSLSLYI).

Its subcellular location is the membrane. Its function is as follows. Required for karyogamy during female gametophyte development, when the two polar nuclei fuse to form the diploid central cell nucleus. The protein is Protein NUCLEAR FUSION DEFECTIVE 4 of Arabidopsis thaliana (Mouse-ear cress).